The primary structure comprises 358 residues: Probable tartrate dehydrogenase/decarboxylase TtuC' (358 aa).

Residues Asp222, Asp246, and Asp250 each coordinate Mn(2+).

The protein belongs to the isocitrate and isopropylmalate dehydrogenases family. Mg(2+) is required as a cofactor. Requires Mn(2+) as cofactor. It depends on K(+) as a cofactor.

It is found in the cytoplasm. It carries out the reaction tartrate + NAD(+) = 2-hydroxy-3-oxosuccinate + NADH + H(+). The enzyme catalyses (2R,3S)-tartrate + NAD(+) = 2-hydroxy-3-oxosuccinate + NADH + H(+). It catalyses the reaction (2R,3R)-tartrate + NAD(+) = 2-hydroxy-3-oxosuccinate + NADH + H(+). The catalysed reaction is (2R,3R)-tartrate + H(+) = (R)-glycerate + CO2. It carries out the reaction (R)-malate + NAD(+) = pyruvate + CO2 + NADH. Its pathway is carbohydrate acid metabolism; tartrate degradation; 2-hydroxy-3-oxosuccinate from L-tartrate: step 1/1. It participates in carbohydrate acid metabolism; tartrate degradation; 2-hydroxy-3-oxosuccinate from meso-tartrate: step 1/1. It functions in the pathway carbohydrate acid metabolism; tartrate degradation; D-glycerate from L-tartrate: step 1/1. In terms of biological role, has multiple catalytic activities. Apart from catalyzing the oxidation of (+)-tartrate to oxaloglycolate, also converts meso-tartrate to D-glycerate and catalyzes the oxidative decarboxylation of D-malate to pyruvate. In Agrobacterium vitis (Rhizobium vitis), this protein is Probable tartrate dehydrogenase/decarboxylase TtuC' (ttuC').